We begin with the raw amino-acid sequence, 430 residues long: DNA repair protein recA homolog 3, mitochondrial (430 aa).

A mitochondrion-targeting transit peptide spans 1–35 (MARILRNVYSLRSSLFSSELLRRSVVGTSFQLRGF). 119-126 (GPEASGKT) contributes to the ATP binding site. A disordered region spans residues 385–415 (DEAADKETESESEEEDSLRVVVSPDNTDDES).

The protein belongs to the RecA family.

It is found in the mitochondrion. In terms of biological role, involved in recombination ability and DNA strand transfer activity. In Arabidopsis thaliana (Mouse-ear cress), this protein is DNA repair protein recA homolog 3, mitochondrial.